Reading from the N-terminus, the 1237-residue chain is GTPase activating protein BUD2 (1237 aa).

The span at 79-110 (GSGKSSISQPPPTTSTRRNLLRKSSNLNSSDQ) shows a compositional bias: low complexity. The tract at residues 79-124 (GSGKSSISQPPPTTSTRRNLLRKSSNLNSSDQSHSKSSEDNEHQPP) is disordered. Positions 111–121 (SHSKSSEDNEH) are enriched in basic and acidic residues. The region spanning 381–503 (NVEHPQLYDF…KQIKTTSTIM (123 aa)) is the C2 domain. The 269-residue stretch at 637-905 (NSQDQAVSNS…PEIYDYFDKL (269 aa)) folds into the Ras-GAP domain. 2 disordered regions span residues 721–762 (SIHE…ERER) and 969–1007 (NNNG…PDLD). The span at 735 to 754 (DVSDDDDDDDDNSSDDDADY) shows a compositional bias: acidic residues. The segment covering 986-996 (RDMEREQDRSR) has biased composition (basic and acidic residues). Residues 1065–1093 (NITLKDIQKQSTKIMNKIQELEIYLENYE) adopt a coiled-coil conformation. The interval 1170 to 1204 (NGGMGNRNGHDVNGHNNNNNNNNNNTGDGYNETDR) is disordered. Residues 1183–1199 (GHNNNNNNNNNNTGDGY) are compositionally biased toward low complexity.

The protein resides in the cytoplasm. It is found in the cell cortex. It localises to the cell tip. Its subcellular location is the cell septum. In terms of biological role, GTPase activating protein (GAP) for RSR1 which is involved in the polarization of yeast and hyphal cells. Directs the site of new daughter cell growth in yeast and hyphal cells. Important for hyphae to maintain linear growth and necessary for hyphal responses to directional cues in the environment (tropisms). Required for correct localization of the septin rings and stabilization of the polarisome at hyphal tips. Involved in cell adhesion. In Candida albicans (strain SC5314 / ATCC MYA-2876) (Yeast), this protein is GTPase activating protein BUD2 (BUD2).